The following is a 1060-amino-acid chain: FACT complex subunit SPT16 (1060 aa).

Residues 458–490 are disordered; that stretch reads FNDDNETQKENNNNNNKRPGLSQTSNTTALKLE. The span at 478 to 490 shows a compositional bias: polar residues; sequence LSQTSNTTALKLE. Residues 508–532 adopt a coiled-coil conformation; sequence NADDANSEKLRQEIQIKLHEKRLQE. Residues 977–1060 are disordered; sequence QGESDEEEES…AKADRNSGFD (84 aa). Acidic residues-rich tracts occupy residues 979–990 and 997–1044; these read ESDEEEESDEES and EDPQ…EDWD. Basic and acidic residues predominate over residues 1045 to 1060; it reads ALERKAAKADRNSGFD.

The protein belongs to the peptidase M24 family. SPT16 subfamily. In terms of assembly, forms a stable heterodimer with POB3. The SPT16-POB3 dimer weakly associates with multiple molecules of NHP6 to form the FACT complex.

It localises to the nucleus. The protein localises to the chromosome. Its function is as follows. Component of the FACT complex, a general chromatin factor that acts to reorganize nucleosomes. The FACT complex is involved in multiple processes that require DNA as a template such as mRNA elongation, DNA replication and DNA repair. During transcription elongation the FACT complex acts as a histone chaperone that both destabilizes and restores nucleosomal structure. It facilitates the passage of RNA polymerase II and transcription by promoting the dissociation of one histone H2A-H2B dimer from the nucleosome, then subsequently promotes the reestablishment of the nucleosome following the passage of RNA polymerase II. This is FACT complex subunit SPT16 (CDC68) from Candida albicans (strain SC5314 / ATCC MYA-2876) (Yeast).